The sequence spans 514 residues: Beta-galactoside alpha-2,6-sialyltransferase 2 (514 aa).

The Cytoplasmic portion of the chain corresponds to 1 to 10; that stretch reads MKSSLKQWRR. The chain crosses the membrane as a helical; Signal-anchor for type II membrane protein span at residues 11–31; the sequence is LALGLILVWALLFLALLSYFM. At 32 to 514 the chain is on the lumenal side; sequence ESRVDDPHAA…PGFNKVHCEP (483 aa). The segment covering 70-92 has biased composition (low complexity); that stretch reads ATSSAPSTSSNTQQEQSQEENPS. A disordered region spans residues 70 to 183; that stretch reads ATSSAPSTSS…TKRVARHGSS (114 aa). Positions 119–132 are enriched in polar residues; that stretch reads FGTQDVGSRSTGVS. The span at 145–166 shows a compositional bias: acidic residues; it reads PQEDEDEEEEVIGGEEEDEEGG. 3 disulfides stabilise this stretch: C246–C512, C289–C441, and C459–C470. Residues N330, N350, and N357 are each glycosylated (N-linked (GlcNAc...) asparagine).

The protein belongs to the glycosyltransferase 29 family.

Its subcellular location is the golgi apparatus. It localises to the golgi stack membrane. It carries out the reaction a beta-D-galactoside + CMP-N-acetyl-beta-neuraminate = an N-acetyl-alpha-neuraminyl-(2-&gt;6)-beta-D-galactosyl derivative + CMP + H(+). In terms of biological role, transfers sialic acid from the donor of substrate CMP-sialic acid to galactose containing acceptor substrates. The protein is Beta-galactoside alpha-2,6-sialyltransferase 2 (st6gal2) of Danio rerio (Zebrafish).